The sequence spans 183 residues: ATP-dependent protease subunit HslV (183 aa).

T13 is a catalytic residue. Positions 168, 171, and 174 each coordinate Na(+).

It belongs to the peptidase T1B family. HslV subfamily. A double ring-shaped homohexamer of HslV is capped on each side by a ring-shaped HslU homohexamer. The assembly of the HslU/HslV complex is dependent on binding of ATP.

Its subcellular location is the cytoplasm. The enzyme catalyses ATP-dependent cleavage of peptide bonds with broad specificity.. With respect to regulation, allosterically activated by HslU binding. Functionally, protease subunit of a proteasome-like degradation complex believed to be a general protein degrading machinery. The protein is ATP-dependent protease subunit HslV of Xylella fastidiosa (strain M23).